Consider the following 186-residue polypeptide: Elongation factor P (186 aa).

Belongs to the elongation factor P family.

The protein resides in the cytoplasm. Its pathway is protein biosynthesis; polypeptide chain elongation. Involved in peptide bond synthesis. Stimulates efficient translation and peptide-bond synthesis on native or reconstituted 70S ribosomes in vitro. Probably functions indirectly by altering the affinity of the ribosome for aminoacyl-tRNA, thus increasing their reactivity as acceptors for peptidyl transferase. This chain is Elongation factor P, found in Streptococcus gordonii (strain Challis / ATCC 35105 / BCRC 15272 / CH1 / DL1 / V288).